We begin with the raw amino-acid sequence, 353 residues long: UPF0283 membrane protein YcjF (353 aa).

The span at 1–19 (MSEPLKPRIDFAEPLKEEP) shows a compositional bias: basic and acidic residues. The disordered stretch occupies residues 1–35 (MSEPLKPRIDFAEPLKEEPTSAFKAQQTFSEAESR). The next 3 membrane-spanning stretches (helical) occupy residues 70–90 (MVMGGLALFGASVVGQGVQWT), 100–120 (VALGGCAAGALIIGAGVGSVV), and 213–233 (ESTLMIAVSSLALVDMAFIAW).

This sequence belongs to the UPF0283 family.

It localises to the cell inner membrane. This is UPF0283 membrane protein YcjF from Salmonella gallinarum (strain 287/91 / NCTC 13346).